Consider the following 300-residue polypeptide: Forkhead transcription factor fkh-9 (300 aa).

Positions 66-161 form a DNA-binding region, fork-head; the sequence is RPSLSYKDLI…DKQTLRRRNR (96 aa). Positions 153–208 are disordered; the sequence is KQTLRRRNRQQPRALAKKSDAGRTLSRDDRGSSGSGETSPSPSQPSISPPNENPMP. The segment covering 169 to 183 has biased composition (basic and acidic residues); the sequence is KKSDAGRTLSRDDRG. Over residues 187 to 198 the composition is skewed to low complexity; that stretch reads SGETSPSPSQPS.

In terms of tissue distribution, expressed in mechanosensory neurons.

It localises to the nucleus. Its function is as follows. Transcription factor. Binds to the regulatory elements of genes that contain the sequence motif 5'-TTGTTTCT-3'. Involved in regulating intestinal transcription of vitellogenin vit-2, acting in concert with transcription factors elt-2, mab-3 and daf-16, and also the TGF-beta/Sma/Mab pathway. Functions downstream of the insulin/IGF-1-like signaling (IIS) mediated pathway, in regeneration of axons after injury and in short-term memory, perhaps acting in neurons, and in modulation of longevity, perhaps acting non-neuronally. Plays a role in the modulation of endoplasmic reticulum (ER) homeostasis during chemical and pathogen stress, including exposure to the Gram-negative bacterium P.aeruginosa. The chain is Forkhead transcription factor fkh-9 from Caenorhabditis elegans.